The sequence spans 229 residues: Large ribosomal subunit protein uL1 (229 aa).

Belongs to the universal ribosomal protein uL1 family. Part of the 50S ribosomal subunit.

Binds directly to 23S rRNA. The L1 stalk is quite mobile in the ribosome, and is involved in E site tRNA release. Its function is as follows. Protein L1 is also a translational repressor protein, it controls the translation of the L11 operon by binding to its mRNA. The chain is Large ribosomal subunit protein uL1 from Streptococcus pneumoniae (strain Taiwan19F-14).